Here is a 108-residue protein sequence, read N- to C-terminus: Peptidyl-prolyl cis-trans isomerase FKBP1C (108 aa).

One can recognise a PPIase FKBP-type domain in the interval 20-108; sequence SQTCVMHYTG…VFDVELLKLE (89 aa).

The protein belongs to the FKBP-type PPIase family. FKBP1 subfamily.

The catalysed reaction is [protein]-peptidylproline (omega=180) = [protein]-peptidylproline (omega=0). Its function is as follows. Catalyzes the cis-trans isomerization of proline imidic peptide bonds in oligopeptides. This chain is Peptidyl-prolyl cis-trans isomerase FKBP1C, found in Homo sapiens (Human).